The chain runs to 1030 residues: Alpha-L-rhamnosidase (1030 aa).

A carbohydrate-binding module-67 (CBM67) region spans residues 133–297 (PSLEGSSWIW…GAGPWGRVAP (165 aa)). Residues Asp179 and Asn180 each contribute to the Ca(2+) site. Alpha-L-rhamnose contacts are provided by residues 179-180 (DN) and Trp203. Ca(2+) contacts are provided by Asn228 and Pro233. Alpha-L-rhamnose contacts are provided by residues Asp630, 634-636 (RDE), Asp643, and Trp695. Catalysis depends on Glu636, which acts as the Proton donor. Residue Glu895 is the Proton acceptor of the active site. His916 serves as a coordination point for alpha-L-rhamnose.

The protein belongs to the glycosyl hydrolase 78 family.

The enzyme catalyses Hydrolysis of terminal non-reducing alpha-L-rhamnose residues in alpha-L-rhamnosides.. Functionally, alpha-L-rhamnosidase which is able to degrade p-nitrophenyl-alpha-L-rhamnopyranoside (PNP-Rha) in vitro. Releases L-rhamnose from citrus flavonoids such as naringin, rutin and hesperidin, and the arabinogalactan-protein (AGP) gum arabic. AGPs are a family of proteoglycans that are localized on the cell surfaces of higher plants. Cleaves both the alpha-1,6 and the alpha-1,2-linked rhamnosyl residues. In Streptomyces avermitilis (strain ATCC 31267 / DSM 46492 / JCM 5070 / NBRC 14893 / NCIMB 12804 / NRRL 8165 / MA-4680), this protein is Alpha-L-rhamnosidase.